A 231-amino-acid chain; its full sequence is Putative carboxymethylenebutenolidase (231 aa).

Residues aspartate 169 and histidine 200 contribute to the active site.

Belongs to the dienelactone hydrolase family.

It carries out the reaction 2-(5-oxo-2,5-dihydrofuran-2-ylidene)acetate + H2O = 4-oxohex-2-enedioate + H(+). This is Putative carboxymethylenebutenolidase from Azospirillum brasilense.